Reading from the N-terminus, the 295-residue chain is Acetylglutamate kinase (295 aa).

Residues 66–67 (GG), R88, and N193 contribute to the substrate site.

This sequence belongs to the acetylglutamate kinase family. ArgB subfamily.

The protein localises to the cytoplasm. It carries out the reaction N-acetyl-L-glutamate + ATP = N-acetyl-L-glutamyl 5-phosphate + ADP. The protein operates within amino-acid biosynthesis; L-arginine biosynthesis; N(2)-acetyl-L-ornithine from L-glutamate: step 2/4. Its function is as follows. Catalyzes the ATP-dependent phosphorylation of N-acetyl-L-glutamate. This is Acetylglutamate kinase from Sinorhizobium fredii (strain NBRC 101917 / NGR234).